Reading from the N-terminus, the 216-residue chain is Protein-L-isoaspartate O-methyltransferase (216 aa).

S61 is a catalytic residue.

This sequence belongs to the methyltransferase superfamily. L-isoaspartyl/D-aspartyl protein methyltransferase family.

The protein localises to the cytoplasm. It carries out the reaction [protein]-L-isoaspartate + S-adenosyl-L-methionine = [protein]-L-isoaspartate alpha-methyl ester + S-adenosyl-L-homocysteine. Its function is as follows. Catalyzes the methyl esterification of L-isoaspartyl residues in peptides and proteins that result from spontaneous decomposition of normal L-aspartyl and L-asparaginyl residues. It plays a role in the repair and/or degradation of damaged proteins. The polypeptide is Protein-L-isoaspartate O-methyltransferase (Dinoroseobacter shibae (strain DSM 16493 / NCIMB 14021 / DFL 12)).